A 277-amino-acid chain; its full sequence is Phosphoenolpyruvate synthase regulatory protein (277 aa).

Residue 157–164 (GVSRCGKT) coordinates ADP.

Belongs to the pyruvate, phosphate/water dikinase regulatory protein family. PSRP subfamily.

It carries out the reaction [pyruvate, water dikinase] + ADP = [pyruvate, water dikinase]-phosphate + AMP + H(+). The enzyme catalyses [pyruvate, water dikinase]-phosphate + phosphate + H(+) = [pyruvate, water dikinase] + diphosphate. In terms of biological role, bifunctional serine/threonine kinase and phosphorylase involved in the regulation of the phosphoenolpyruvate synthase (PEPS) by catalyzing its phosphorylation/dephosphorylation. The sequence is that of Phosphoenolpyruvate synthase regulatory protein from Escherichia coli O6:K15:H31 (strain 536 / UPEC).